The following is a 335-amino-acid chain: NmrA-like family domain-containing oxidoreductase hkm9 (335 aa).

NADP(+) contacts are provided by residues 12-17 (GATGNQ), 38-42 (RNPNS), 59-60 (DG), 80-82 (INS), K137, and 161-164 (YLEN).

This sequence belongs to the NmrA-type oxidoreductase family.

It participates in secondary metabolite biosynthesis. NmrA-like family domain-containing oxidoreductase; part of the gene cluster that mediates the biosynthesis of hancockiamides, an unusual new family of N-cinnamoylated piperazines. The NRPS hkm10 and the NmrA-like reductase hkm9 are proposed to convert two molecules of L-Phe to the intermediary piperazine called xenocockiamide A. Xenocockiamide A is then converted to hancockiamide D via a series of hydroxylations and O-methylations. The tyrosinase hkm6 may catalyze an aromatic hydroxylation, then the 2-oxoglutarate-dependent Fe(II) dioxygenase hkm4 and the FAD-dependent phenol hydroxylase hkm7 may catalyze consecutive hydroxylations to install 2 more hydroxy groups, and the methyltransferase hkm8 probably catalyzes two methylations using 2 molecules of S-adenosyl-L-methionine (SAM). The NRPS hkm11 activates and transfers trans-cinnamate supplied by the PAL hkm12 to hancockiamide D and produces hancockiamide A. NRPS Hkm11 has the flexibility to tolerate the bulky hancockiamide G as a substrate and the absence of the acetyl-transferase hkm3 opens up the opportunity for hkm11 to introduce a second N-cinnamoyl moiety. The cytochrome P450 monooxygenase hkm5 catalyzes the methylenedioxy bridge formation, converting hancockiamide A into hancockiamide G. Hkm5 can also convert hancockiamide B into hancockiamide C, and hancockiamide D into hancockiamide H. The N-acetyltransferase hkm3 finally transfers an acetyl group to 1-N of piperazine, converting hancockiamide A into hancockiamide B and hancockiamide G into hancockiamide C. The chain is NmrA-like family domain-containing oxidoreductase hkm9 from Aspergillus hancockii.